The sequence spans 114 residues: Large ribosomal subunit protein P2v (114 aa).

Residues valine 74–aspartate 114 are disordered. A Phosphoserine modification is found at serine 103.

The protein belongs to the eukaryotic ribosomal protein P1/P2 family. As to quaternary structure, P1 and P2 exist as dimers at the large ribosomal subunit. In terms of processing, phosphorylated.

Plays an important role in the elongation step of protein synthesis. The sequence is that of Large ribosomal subunit protein P2v (RPP2E) from Arabidopsis thaliana (Mouse-ear cress).